A 573-amino-acid chain; its full sequence is Cytosolic 5'-nucleotidase 1B (573 aa).

The segment covering 1-11 has biased composition (basic residues); sequence MSQTSLKHKKK. Disordered stretches follow at residues 1-200 and 218-238; these read MSQT…PPTE and EPEY…EEDE. Basic and acidic residues predominate over residues 12-35; the sequence is NEPGMRYSKESLDAEKRKDSDKTG. The segment covering 60 to 73 has biased composition (polar residues); sequence NQWSRTSRSPSTGA. Low complexity predominate over residues 93-105; the sequence is SSTTSRTSSASPS. Over residues 115–136 the composition is skewed to polar residues; the sequence is TSEKSSIQQTPQNRPITQLESQ. Composition is skewed to basic and acidic residues over residues 161–174 and 182–194; these read WAHR…DLQL and DSRE…REYP. Asp428 acts as the Nucleophile in catalysis.

This sequence belongs to the 5'-nucleotidase type 3 family. Mg(2+) serves as cofactor. Expressed at highest levels in testis. Also expressed in brain, skeletal muscle, kidney and heart.

It is found in the cytoplasm. It catalyses the reaction a ribonucleoside 5'-phosphate + H2O = a ribonucleoside + phosphate. The enzyme catalyses AMP + H2O = adenosine + phosphate. Its activity is regulated as follows. Activated by ADP. In terms of biological role, catalyzes the hydrolysis of nucleotide monophosphates, releasing inorganic phosphate and the corresponding nucleoside, AMP is the major substrate. The polypeptide is Cytosolic 5'-nucleotidase 1B (Nt5c1b) (Mus musculus (Mouse)).